Reading from the N-terminus, the 154-residue chain is Endoribonuclease YbeY (154 aa).

3 residues coordinate Zn(2+): H120, H124, and H130.

It belongs to the endoribonuclease YbeY family. Requires Zn(2+) as cofactor.

The protein resides in the cytoplasm. Functionally, single strand-specific metallo-endoribonuclease involved in late-stage 70S ribosome quality control and in maturation of the 3' terminus of the 16S rRNA. In Leptospira biflexa serovar Patoc (strain Patoc 1 / Ames), this protein is Endoribonuclease YbeY.